A 208-amino-acid polypeptide reads, in one-letter code: Ras-related protein Rab-6A (208 aa).

Position 2 is an N-acetylserine (Ser2). Residues Ser23, Val24, Gly25, Lys26, Thr27, Ser28, Asp39, Asn40, Tyr42, and Thr45 each contribute to the GTP site. Thr27 serves as a coordination point for Mg(2+). The Switch 1 signature appears at 32 to 50 (RFMYDSFDNTYQATIGIDF). Mg(2+) contacts are provided by Thr45 and Asp68. The short motif at 69-88 (TAGQERFRSLIPSYIRDSTV) is the Switch 2 element. Gly71 is a GTP binding site. Tyr82 is modified (O-AMP-tyrosine; by Legionella DrrA). GTP contacts are provided by Asn126, Lys127, Asp129, Ser156, Ala157, and Lys158. A Phosphoserine modification is found at Ser184. Residues Cys206 and Cys208 are each lipidated (S-geranylgeranyl cysteine). The residue at position 208 (Cys208) is a Cysteine methyl ester.

This sequence belongs to the small GTPase superfamily. Rab family. In terms of assembly, interacts (GTP-bound) with DYNLRB1; the interaction is direct. Interacts with BICD1. Interacts with BICD2; the interaction is direct. Interacts (GTP-bound) with VPS13B. As to quaternary structure, interacts with BICD1. Interacts (GDP-bound) with DYNLRB1; the interaction is direct. Interacts (GTP-bound) with VPS13B. Interacts with BICDL1; leads to its accumulation in the pericentrosomal region. Interacts with SCYL1BP1. Interacts with VSP52. Interacts with RABGAP1. Interacts with GCC2 (via its GRIP domain). Interacts with RAB6IP1 (via its RUN 1 domain). Interacts with TMF1. Interacts with CIMAP3. Interacts (GTP-bound) with APBA1/MINT1 isoform 2, also called Mint1_826, but not with isoform 1. Interacts with RIC1; the interaction is direct with a preference for RAB6A-GDP. Interacts with RGP1; the interaction is direct with a preference for RAB6A-GDP. In terms of assembly, (Microbial infection) Interacts with human cytomegalovirus protein UL32. Requires Mg(2+) as cofactor. Prenylated. In terms of tissue distribution, ubiquitous.

It is found in the golgi apparatus membrane. Its subcellular location is the cytoplasmic vesicle. The protein localises to the secretory vesicle. It localises to the acrosome membrane. The enzyme catalyses GTP + H2O = GDP + phosphate + H(+). Its activity is regulated as follows. Regulated by guanine nucleotide exchange factors (GEFs) which promote the exchange of bound GDP for free GTP. Regulated by GTPase activating proteins (GAPs) which increase the GTP hydrolysis activity. Inhibited by GDP dissociation inhibitors (GDIs). The small GTPases Rab are key regulators of intracellular membrane trafficking, from the formation of transport vesicles to their fusion with membranes. Rabs cycle between an inactive GDP-bound form and an active GTP-bound form that is able to recruit to membranes different sets of downstream effectors directly responsible for vesicle formation, movement, tethering and fusion. RAB6A acts as a regulator of COPI-independent retrograde transport from the Golgi apparatus towards the endoplasmic reticulum (ER). Has a low GTPase activity. Recruits VPS13B to the Golgi membrane. Plays a role in neuron projection development. This Homo sapiens (Human) protein is Ras-related protein Rab-6A.